A 348-amino-acid polypeptide reads, in one-letter code: Holliday junction branch migration complex subunit RuvB (348 aa).

The segment at M1–Y183 is large ATPase domain (RuvB-L). Residues L22, R23, G64, K67, T68, T69, E130–F132, R173, Y183, and R220 contribute to the ATP site. T68 is a binding site for Mg(2+). A small ATPAse domain (RuvB-S) region spans residues T184–D254. Residues H257–E348 are head domain (RuvB-H). Positions 293, 312, and 317 each coordinate DNA.

This sequence belongs to the RuvB family. In terms of assembly, homohexamer. Forms an RuvA(8)-RuvB(12)-Holliday junction (HJ) complex. HJ DNA is sandwiched between 2 RuvA tetramers; dsDNA enters through RuvA and exits via RuvB. An RuvB hexamer assembles on each DNA strand where it exits the tetramer. Each RuvB hexamer is contacted by two RuvA subunits (via domain III) on 2 adjacent RuvB subunits; this complex drives branch migration. In the full resolvosome a probable DNA-RuvA(4)-RuvB(12)-RuvC(2) complex forms which resolves the HJ.

Its subcellular location is the cytoplasm. The enzyme catalyses ATP + H2O = ADP + phosphate + H(+). In terms of biological role, the RuvA-RuvB-RuvC complex processes Holliday junction (HJ) DNA during genetic recombination and DNA repair, while the RuvA-RuvB complex plays an important role in the rescue of blocked DNA replication forks via replication fork reversal (RFR). RuvA specifically binds to HJ cruciform DNA, conferring on it an open structure. The RuvB hexamer acts as an ATP-dependent pump, pulling dsDNA into and through the RuvAB complex. RuvB forms 2 homohexamers on either side of HJ DNA bound by 1 or 2 RuvA tetramers; 4 subunits per hexamer contact DNA at a time. Coordinated motions by a converter formed by DNA-disengaged RuvB subunits stimulates ATP hydrolysis and nucleotide exchange. Immobilization of the converter enables RuvB to convert the ATP-contained energy into a lever motion, pulling 2 nucleotides of DNA out of the RuvA tetramer per ATP hydrolyzed, thus driving DNA branch migration. The RuvB motors rotate together with the DNA substrate, which together with the progressing nucleotide cycle form the mechanistic basis for DNA recombination by continuous HJ branch migration. Branch migration allows RuvC to scan DNA until it finds its consensus sequence, where it cleaves and resolves cruciform DNA. This Methylocella silvestris (strain DSM 15510 / CIP 108128 / LMG 27833 / NCIMB 13906 / BL2) protein is Holliday junction branch migration complex subunit RuvB.